A 598-amino-acid polypeptide reads, in one-letter code: Acetylcholine receptor subunit alpha-type acr-5 (598 aa).

The N-terminal stretch at 1-16 (MLPNIILILLIRYCSC) is a signal peptide. At 17 to 323 (GAGSRVYEKY…HLVIRRKPLY (307 aa)) the chain is on the extracellular side. 6 N-linked (GlcNAc...) asparagine glycosylation sites follow: asparagine 54, asparagine 71, asparagine 77, asparagine 134, asparagine 178, and asparagine 252. A helical membrane pass occupies residues 324–344 (YMINLVVPTSIITIVAVTGFF). At 345-356 (TPTSSSSERDEK) the chain is on the cytoplasmic side. Residues 357 to 377 (LYLGINTLLTMSVMMLMVCNQ) form a helical membrane-spanning segment. Residues 378-391 (MPSTSTYVPLMSWY) lie on the Extracellular side of the membrane. The chain crosses the membrane as a helical span at residues 392 to 412 (YIGIIMVIVVGTFLATGVLAI). At 413-563 (HGQKHYNKPI…WEFLANVLDR (151 aa)) the chain is on the cytoplasmic side. A helical transmembrane segment spans residues 564-584 (ILLTIFCGFTFAVFIILIGFD). The Extracellular portion of the chain corresponds to 585 to 598 (SFFTFHTDSPPKTM).

It belongs to the ligand-gated ion channel (TC 1.A.9) family. Acetylcholine receptor (TC 1.A.9.1) subfamily.

The protein resides in the postsynaptic cell membrane. It localises to the cell membrane. In terms of biological role, subunit of nicotinic acetylcholine receptor (nAChR). Involved in nAChR sensitivity to nicotine. Modulates locomotion towards the drug nicotine. In Caenorhabditis elegans, this protein is Acetylcholine receptor subunit alpha-type acr-5.